Here is a 103-residue protein sequence, read N- to C-terminus: Large ribosomal subunit protein bL21 (103 aa).

This sequence belongs to the bacterial ribosomal protein bL21 family. In terms of assembly, part of the 50S ribosomal subunit. Contacts protein L20.

Its function is as follows. This protein binds to 23S rRNA in the presence of protein L20. In Acinetobacter baumannii (strain AB307-0294), this protein is Large ribosomal subunit protein bL21.